The chain runs to 526 residues: Bifunctional purine biosynthesis protein PurH (526 aa).

Positions 1 to 149 (MLHSLPIRRA…KNHEAVTVVV (149 aa)) constitute an MGS-like domain.

The protein belongs to the PurH family.

The enzyme catalyses (6R)-10-formyltetrahydrofolate + 5-amino-1-(5-phospho-beta-D-ribosyl)imidazole-4-carboxamide = 5-formamido-1-(5-phospho-D-ribosyl)imidazole-4-carboxamide + (6S)-5,6,7,8-tetrahydrofolate. It catalyses the reaction IMP + H2O = 5-formamido-1-(5-phospho-D-ribosyl)imidazole-4-carboxamide. It participates in purine metabolism; IMP biosynthesis via de novo pathway; 5-formamido-1-(5-phospho-D-ribosyl)imidazole-4-carboxamide from 5-amino-1-(5-phospho-D-ribosyl)imidazole-4-carboxamide (10-formyl THF route): step 1/1. The protein operates within purine metabolism; IMP biosynthesis via de novo pathway; IMP from 5-formamido-1-(5-phospho-D-ribosyl)imidazole-4-carboxamide: step 1/1. The protein is Bifunctional purine biosynthesis protein PurH of Rhodospirillum rubrum (strain ATCC 11170 / ATH 1.1.1 / DSM 467 / LMG 4362 / NCIMB 8255 / S1).